The sequence spans 139 residues: ATP synthase epsilon chain (139 aa).

This sequence belongs to the ATPase epsilon chain family. As to quaternary structure, F-type ATPases have 2 components, CF(1) - the catalytic core - and CF(0) - the membrane proton channel. CF(1) has five subunits: alpha(3), beta(3), gamma(1), delta(1), epsilon(1). CF(0) has three main subunits: a, b and c.

The protein localises to the cell inner membrane. Produces ATP from ADP in the presence of a proton gradient across the membrane. This chain is ATP synthase epsilon chain, found in Actinobacillus pleuropneumoniae serotype 5b (strain L20).